The chain runs to 278 residues: Hydroxyethylthiazole kinase (278 aa).

Met48 contributes to the substrate binding site. Residues Arg124 and Thr175 each contribute to the ATP site. Gly202 serves as a coordination point for substrate.

This sequence belongs to the Thz kinase family. Requires Mg(2+) as cofactor.

The enzyme catalyses 5-(2-hydroxyethyl)-4-methylthiazole + ATP = 4-methyl-5-(2-phosphooxyethyl)-thiazole + ADP + H(+). It functions in the pathway cofactor biosynthesis; thiamine diphosphate biosynthesis; 4-methyl-5-(2-phosphoethyl)-thiazole from 5-(2-hydroxyethyl)-4-methylthiazole: step 1/1. Its function is as follows. Catalyzes the phosphorylation of the hydroxyl group of 4-methyl-5-beta-hydroxyethylthiazole (THZ). The protein is Hydroxyethylthiazole kinase of Clostridium botulinum (strain Alaska E43 / Type E3).